The chain runs to 311 residues: Acetyl-coenzyme A carboxylase carboxyl transferase subunit alpha (311 aa).

In terms of domain architecture, CoA carboxyltransferase C-terminal spans Asn36–Glu286.

The protein belongs to the AccA family. In terms of assembly, acetyl-CoA carboxylase is a heterohexamer composed of biotin carboxyl carrier protein (AccB), biotin carboxylase (AccC) and two subunits each of ACCase subunit alpha (AccA) and ACCase subunit beta (AccD).

It is found in the cytoplasm. It catalyses the reaction N(6)-carboxybiotinyl-L-lysyl-[protein] + acetyl-CoA = N(6)-biotinyl-L-lysyl-[protein] + malonyl-CoA. It participates in lipid metabolism; malonyl-CoA biosynthesis; malonyl-CoA from acetyl-CoA: step 1/1. Component of the acetyl coenzyme A carboxylase (ACC) complex. First, biotin carboxylase catalyzes the carboxylation of biotin on its carrier protein (BCCP) and then the CO(2) group is transferred by the carboxyltransferase to acetyl-CoA to form malonyl-CoA. The polypeptide is Acetyl-coenzyme A carboxylase carboxyl transferase subunit alpha (Campylobacter concisus (strain 13826)).